The primary structure comprises 128 residues: Large ribosomal subunit protein bL17 (128 aa).

The protein belongs to the bacterial ribosomal protein bL17 family. In terms of assembly, part of the 50S ribosomal subunit. Contacts protein L32.

The protein is Large ribosomal subunit protein bL17 of Erwinia tasmaniensis (strain DSM 17950 / CFBP 7177 / CIP 109463 / NCPPB 4357 / Et1/99).